The following is a 327-amino-acid chain: MSPATVTIDTTPDFSNGGAPHSTLLLAPPAMAAQQDAMAAALTDAAPLGSRPELYMLDRLAAGLTNLAPAAYDLVLVLASGADPLLSRRDVFAKIADAMKPGAKLRSRDGSPLDAAIAKEAILAGLVESAEGAYEKPAEEVAAVPLKFLKKKNKGEGGGPVQSPAAATQPTAPAPAAAAKSLPNGVVMVDLNDDFDVSDDEMIDEDELMTEEDLMRPIQQPPECAPKPGKKRRACKDCTCGLAERLEAQDKARRDKADKQLQEKAATPFKLASEDLNELDFTVQGKTGSCGSCALGDAFRCADCPYIGLPAFKPGEEVTILNNVAQL.

Residues 1–14 (MSPATVTIDTTPDF) are compositionally biased toward polar residues. 2 disordered regions span residues 1–20 (MSPATVTIDTTPDFSNGGAP) and 153–179 (NKGEGGGPVQSPAAATQPTAPAPAAAA). Residues 17 to 144 (GGAPHSTLLL…EKPAEEVAAV (128 aa)) form an N-terminal SAM-like domain region. The tract at residues 145–214 (PLKFLKKKNK…EDELMTEEDL (70 aa)) is linker. The span at 164-179 (PAAATQPTAPAPAAAA) shows a compositional bias: low complexity. Cys224, Cys235, Cys238, and Cys240 together coordinate [2Fe-2S] cluster. The fe-S binding site A stretch occupies residues 224–240 (CAPKPGKKRRACKDCTC). [4Fe-4S] cluster-binding residues include Cys290, Cys293, Cys301, and Cys304. 2 short sequence motifs (cx2C motif) span residues 290–293 (CGSC) and 301–304 (CADC). Residues 290–304 (CGSCALGDAFRCADC) are fe-S binding site B.

This sequence belongs to the anamorsin family. As to quaternary structure, monomer. Interacts with TAH18. Interacts with MIA40. Requires [2Fe-2S] cluster as cofactor. [4Fe-4S] cluster is required as a cofactor.

The protein localises to the cytoplasm. It is found in the mitochondrion intermembrane space. Component of the cytosolic iron-sulfur (Fe-S) protein assembly (CIA) machinery required for the maturation of extramitochondrial Fe-S proteins. Part of an electron transfer chain functioning in an early step of cytosolic Fe-S biogenesis, facilitating the de novo assembly of a [4Fe-4S] cluster on the scaffold complex CFD1-NBP35. Electrons are transferred to DRE2 from NADPH via the FAD- and FMN-containing protein TAH18. TAH18-DRE2 are also required for the assembly of the diferric tyrosyl radical cofactor of ribonucleotide reductase (RNR), probably by providing electrons for reduction during radical cofactor maturation in the catalytic small subunit RNR2. The sequence is that of Fe-S cluster assembly protein DRE2 from Pyricularia oryzae (strain 70-15 / ATCC MYA-4617 / FGSC 8958) (Rice blast fungus).